The chain runs to 183 residues: NAD(P)H-quinone oxidoreductase subunit J (183 aa).

Residues 1–21 (MAEENAQEKQAPPSAGEQSEP) form a disordered region.

The protein belongs to the complex I 30 kDa subunit family. In terms of assembly, NDH-1 can be composed of about 15 different subunits; different subcomplexes with different compositions have been identified which probably have different functions.

The protein localises to the cellular thylakoid membrane. The enzyme catalyses a plastoquinone + NADH + (n+1) H(+)(in) = a plastoquinol + NAD(+) + n H(+)(out). It catalyses the reaction a plastoquinone + NADPH + (n+1) H(+)(in) = a plastoquinol + NADP(+) + n H(+)(out). NDH-1 shuttles electrons from an unknown electron donor, via FMN and iron-sulfur (Fe-S) centers, to quinones in the respiratory and/or the photosynthetic chain. The immediate electron acceptor for the enzyme in this species is believed to be plastoquinone. Couples the redox reaction to proton translocation, and thus conserves the redox energy in a proton gradient. Cyanobacterial NDH-1 also plays a role in inorganic carbon-concentration. In Synechococcus sp. (strain JA-2-3B'a(2-13)) (Cyanobacteria bacterium Yellowstone B-Prime), this protein is NAD(P)H-quinone oxidoreductase subunit J.